The chain runs to 52 residues: Large ribosomal subunit protein eL39 (52 aa).

The protein belongs to the eukaryotic ribosomal protein eL39 family.

The polypeptide is Large ribosomal subunit protein eL39 (Caldivirga maquilingensis (strain ATCC 700844 / DSM 13496 / JCM 10307 / IC-167)).